Reading from the N-terminus, the 441-residue chain is 3-phosphoshikimate 1-carboxyvinyltransferase (441 aa).

A compositionally biased stretch (polar residues) spans 1 to 10; sequence MSVTSTASSS. The disordered stretch occupies residues 1–21; the sequence is MSVTSTASSSRELRAGGGLSG. Residues Lys29, Ser30, and Arg34 each coordinate 3-phosphoshikimate. Lys29 provides a ligand contact to phosphoenolpyruvate. Positions 103 and 132 each coordinate phosphoenolpyruvate. The 3-phosphoshikimate site is built by Ser177, Gln179, Asp328, and Lys355. Gln179 serves as a coordination point for phosphoenolpyruvate. Asp328 (proton acceptor) is an active-site residue. The phosphoenolpyruvate site is built by Arg359 and Arg401.

Belongs to the EPSP synthase family. In terms of assembly, monomer.

It localises to the cytoplasm. The enzyme catalyses 3-phosphoshikimate + phosphoenolpyruvate = 5-O-(1-carboxyvinyl)-3-phosphoshikimate + phosphate. Its pathway is metabolic intermediate biosynthesis; chorismate biosynthesis; chorismate from D-erythrose 4-phosphate and phosphoenolpyruvate: step 6/7. Its function is as follows. Catalyzes the transfer of the enolpyruvyl moiety of phosphoenolpyruvate (PEP) to the 5-hydroxyl of shikimate-3-phosphate (S3P) to produce enolpyruvyl shikimate-3-phosphate and inorganic phosphate. The sequence is that of 3-phosphoshikimate 1-carboxyvinyltransferase from Prochlorococcus marinus (strain MIT 9303).